The primary structure comprises 722 residues: MTELKPLLIELGTEELPVNALPSLSRAFFEGVLAGLERRGIVIDHGEAKSLSTPRRLAVLLTAVAVEQPKQYRELFGPYLNTAFDTEGKPTKALEGFAAKCGVNWRTLERIRDTKGERFVHRVVVPGERTDALLPGILTEAIAGMPIPKPMRWGAHEYLFARPVHWLVMLFGQDVVEAEIMGVKAGRISRGHRFLYDKPVSLSDPQNYIDVLQAAYVLVDPAARRARIVAEIEAVARQVGGVARITEDNVAQVVNLVEWPSAVLCSFERVFLEVPQEALIQTMEVNQKFFPVLDSLGKLTEKFIGIANIESNDVAEVAKGYERVIRPRFSDAKFFFNEDLKQGLKAMGERLRTVTYHAKLGTLADKVARVLVLAEAIAPQIGVDPLLARRVALLSKNDLQSRMVNEFPELQGVAGHHYALISGELPEVAMAIEDAYRPRFSGDEIARSPLGKVLGLAERLDTLACGFAVGMKPTGNKDPFGLRRNALGLARTIIESRFDLDLKVLLDQASDWVAFATTIEQERHAQESVKQSKKEAAVKHSLPQVSDEKSARIEELYDFIVERLRGYYADKGIPTTHFNAVAELKPVSLYDFHRRLDAIGRFAALPEAEALAVANKRIRNILRKAEIKIPASVDATLFDQPAESGLLVALEGVITDTRSALDCKNYVSVLTCLARLRPPIDEFFDKVMVNDENLMLRANRLALLQRLGEYLCCVAAIEHLSN.

This sequence belongs to the class-II aminoacyl-tRNA synthetase family. Tetramer of two alpha and two beta subunits.

It localises to the cytoplasm. It carries out the reaction tRNA(Gly) + glycine + ATP = glycyl-tRNA(Gly) + AMP + diphosphate. In Xylella fastidiosa (strain M12), this protein is Glycine--tRNA ligase beta subunit.